A 593-amino-acid polypeptide reads, in one-letter code: Elongation factor 4 (593 aa).

The tr-type G domain maps to 2 to 181 (KNIRNFCIIA…AVVERIPHPT (180 aa)). Residues 14–19 (DHGKST) and 128–131 (NKCD) contribute to the GTP site.

This sequence belongs to the TRAFAC class translation factor GTPase superfamily. Classic translation factor GTPase family. LepA subfamily.

It is found in the cell inner membrane. The catalysed reaction is GTP + H2O = GDP + phosphate + H(+). Functionally, required for accurate and efficient protein synthesis under certain stress conditions. May act as a fidelity factor of the translation reaction, by catalyzing a one-codon backward translocation of tRNAs on improperly translocated ribosomes. Back-translocation proceeds from a post-translocation (POST) complex to a pre-translocation (PRE) complex, thus giving elongation factor G a second chance to translocate the tRNAs correctly. Binds to ribosomes in a GTP-dependent manner. In Phocaeicola vulgatus (strain ATCC 8482 / DSM 1447 / JCM 5826 / CCUG 4940 / NBRC 14291 / NCTC 11154) (Bacteroides vulgatus), this protein is Elongation factor 4.